Consider the following 114-residue polypeptide: Photosystem II reaction center Psb28 protein (114 aa).

Belongs to the Psb28 family. As to quaternary structure, part of the photosystem II complex.

The protein resides in the plastid. It is found in the chloroplast thylakoid membrane. This Thalassiosira pseudonana (Marine diatom) protein is Photosystem II reaction center Psb28 protein.